The sequence spans 534 residues: O-phosphoserine--tRNA(Cys) ligase (534 aa).

Substrate is bound by residues 186–188 (HMT), 231–233 (SAS), 273–274 (YY), and Asn-325.

It belongs to the class-II aminoacyl-tRNA synthetase family. O-phosphoseryl-tRNA(Cys) synthetase subfamily. In terms of assembly, homotetramer. Interacts with SepCysS.

It carries out the reaction tRNA(Cys) + O-phospho-L-serine + ATP = O-phospho-L-seryl-tRNA(Cys) + AMP + diphosphate. Catalyzes the attachment of O-phosphoserine (Sep) to tRNA(Cys). The sequence is that of O-phosphoserine--tRNA(Cys) ligase (sepS) from Archaeoglobus fulgidus (strain ATCC 49558 / DSM 4304 / JCM 9628 / NBRC 100126 / VC-16).